Consider the following 395-residue polypeptide: Probable FMNH2-dependent monooxygenase SfnC (395 aa).

Its function is as follows. Involved in the dimethyl sulfide degradation pathway. This is Probable FMNH2-dependent monooxygenase SfnC from Pseudomonas putida (Arthrobacter siderocapsulatus).